Here is a 33-residue protein sequence, read N- to C-terminus: Gastrin (33 aa).

The tract at residues 1–21 (ELEPQGPPHLGTDLSKKQGPW) is disordered. Pyrrolidone carboxylic acid is present on Gln-18. Tyr-28 is subject to Sulfotyrosine. Residue Phe-33 is modified to Phenylalanine amide.

This sequence belongs to the gastrin/cholecystokinin family.

It is found in the secreted. In terms of biological role, gastrin stimulates the stomach mucosa to produce and secrete hydrochloric acid and the pancreas to secrete its digestive enzymes. It also stimulates smooth muscle contraction and increases blood circulation and water secretion in the stomach and intestine. The sequence is that of Gastrin (GAST) from Chinchilla chinchilla (Short-tailed chinchilla).